Consider the following 212-residue polypeptide: Ribosomal RNA small subunit methyltransferase G (212 aa).

S-adenosyl-L-methionine-binding positions include F78, 96 to 98 (ESS), 124 to 125 (VE), and R141.

The protein belongs to the methyltransferase superfamily. RNA methyltransferase RsmG family.

The protein localises to the cytoplasm. Functionally, specifically methylates the N7 position of a guanine in 16S rRNA. This chain is Ribosomal RNA small subunit methyltransferase G, found in Onion yellows phytoplasma (strain OY-M).